The sequence spans 264 residues: H-2 class II histocompatibility antigen, I-E beta chain (264 aa).

An N-terminal signal peptide occupies residues 1–31; sequence MVWLPRVPCVAAVILLLTVLSPPVALVRNSR. Positions 32–121 are beta-1; sequence PRFLEYSTSE…IFDNFLVPRR (90 aa). Residues 32 to 225 are Extracellular-facing; that stretch reads PRFLEYSTSE…KAQSTSAQNK (194 aa). 2 disulfides stabilise this stretch: C42–C106 and C144–C200. N-linked (GlcNAc...) asparagine glycosylation occurs at N46. Residues 122–215 are beta-2; it reads VEPTVTVYPT…SLTDPVTVEW (94 aa). Residues 124-214 enclose the Ig-like C1-type domain; that stretch reads PTVTVYPTKT…PSLTDPVTVE (91 aa). The interval 216-225 is connecting peptide; the sequence is KAQSTSAQNK. The helical transmembrane segment at 226–248 threads the bilayer; that stretch reads MLSGVGGFVLGLLFLGAGLFIYF. The Cytoplasmic segment spans residues 249–264; that stretch reads RNQKGQSGLQPTGLLS.

This sequence belongs to the MHC class II family. In terms of processing, ubiquitinated in immature dendritic cells leading to down-regulation of MHC class II.

The protein resides in the membrane. The chain is H-2 class II histocompatibility antigen, I-E beta chain (H2-Eb1) from Mus musculus (Mouse).